We begin with the raw amino-acid sequence, 425 residues long: Glutamyl-tRNA reductase (425 aa).

Substrate-binding positions include 49 to 52 (TCNR), Ser-106, 111 to 113 (EPQ), and Gln-117. Residue Cys-50 is the Nucleophile of the active site. Residue 186-191 (GAGETI) participates in NADP(+) binding.

Belongs to the glutamyl-tRNA reductase family. As to quaternary structure, homodimer.

The catalysed reaction is (S)-4-amino-5-oxopentanoate + tRNA(Glu) + NADP(+) = L-glutamyl-tRNA(Glu) + NADPH + H(+). Its pathway is porphyrin-containing compound metabolism; protoporphyrin-IX biosynthesis; 5-aminolevulinate from L-glutamyl-tRNA(Glu): step 1/2. Functionally, catalyzes the NADPH-dependent reduction of glutamyl-tRNA(Glu) to glutamate 1-semialdehyde (GSA). In Saccharophagus degradans (strain 2-40 / ATCC 43961 / DSM 17024), this protein is Glutamyl-tRNA reductase.